A 145-amino-acid chain; its full sequence is D-aminoacyl-tRNA deacylase (145 aa).

The short motif at 137-138 (GP) is the Gly-cisPro motif, important for rejection of L-amino acids element.

This sequence belongs to the DTD family. Homodimer.

The protein resides in the cytoplasm. The catalysed reaction is glycyl-tRNA(Ala) + H2O = tRNA(Ala) + glycine + H(+). It catalyses the reaction a D-aminoacyl-tRNA + H2O = a tRNA + a D-alpha-amino acid + H(+). An aminoacyl-tRNA editing enzyme that deacylates mischarged D-aminoacyl-tRNAs. Also deacylates mischarged glycyl-tRNA(Ala), protecting cells against glycine mischarging by AlaRS. Acts via tRNA-based rather than protein-based catalysis; rejects L-amino acids rather than detecting D-amino acids in the active site. By recycling D-aminoacyl-tRNA to D-amino acids and free tRNA molecules, this enzyme counteracts the toxicity associated with the formation of D-aminoacyl-tRNA entities in vivo and helps enforce protein L-homochirality. The polypeptide is D-aminoacyl-tRNA deacylase (Klebsiella pneumoniae (strain 342)).